Consider the following 102-residue polypeptide: Acid shock protein (102 aa).

Positions M1 to A21 are cleaved as a signal peptide. Residues A21–K41 are compositionally biased toward low complexity. The segment at A21–A102 is disordered. Positions A22–Q58 are excised as a propeptide. The span at A80–H90 shows a compositional bias: basic residues. Over residues Q91–A102 the composition is skewed to low complexity.

This sequence belongs to the Asr family. Post-translationally, proteolytic processing gives rise to the active protein.

The protein localises to the periplasm. Required for growth and/or survival at acidic conditions. The polypeptide is Acid shock protein (Escherichia coli (strain K12 / MC4100 / BW2952)).